We begin with the raw amino-acid sequence, 362 residues long: Protein BIG GRAIN 1-like D (362 aa).

Disordered stretches follow at residues Ile-22–His-113, Lys-132–Ile-168, and Val-303–Ser-327. Over residues Asp-23–Thr-47 the composition is skewed to polar residues. Basic and acidic residues predominate over residues Val-50–Phe-60. Positions Ser-63–Ser-78 are enriched in low complexity. Basic and acidic residues predominate over residues Lys-132–Arg-144. Over residues Glu-309–Ala-324 the composition is skewed to acidic residues.

It belongs to the BIG GRAIN 1 (BG1) plant protein family.

Its subcellular location is the cell membrane. In terms of biological role, involved in auxin transport. Regulator of the auxin signaling pathway. This Arabidopsis thaliana (Mouse-ear cress) protein is Protein BIG GRAIN 1-like D.